The chain runs to 216 residues: Probable nicotinate-nucleotide adenylyltransferase (216 aa).

It belongs to the NadD family.

The enzyme catalyses nicotinate beta-D-ribonucleotide + ATP + H(+) = deamido-NAD(+) + diphosphate. Its pathway is cofactor biosynthesis; NAD(+) biosynthesis; deamido-NAD(+) from nicotinate D-ribonucleotide: step 1/1. Functionally, catalyzes the reversible adenylation of nicotinate mononucleotide (NaMN) to nicotinic acid adenine dinucleotide (NaAD). In Geobacillus kaustophilus (strain HTA426), this protein is Probable nicotinate-nucleotide adenylyltransferase.